A 307-amino-acid chain; its full sequence is Zinc-alpha-2-glycoprotein (307 aa).

The N-terminal stretch at 1–17 (MVPVLLSLPLLLGPAVF) is a signal peptide. Glutamine 18 bears the Pyrrolidone carboxylic acid mark. Cysteine 118 and cysteine 181 are disulfide-bonded. 3 N-linked (GlcNAc...) asparagine glycosylation sites follow: asparagine 123, asparagine 190, and asparagine 254. The Ig-like C1-type domain maps to 202–287 (PTVTITSRVI…DHRGFSQSLS (86 aa)). An intrachain disulfide couples cysteine 220 to cysteine 275.

Belongs to the MHC class I family. In terms of assembly, interacts with PIP.

The protein resides in the secreted. Its function is as follows. Stimulates lipid degradation in adipocytes and causes the extensive fat losses associated with some advanced cancers. In Mus musculus (Mouse), this protein is Zinc-alpha-2-glycoprotein (Azgp1).